We begin with the raw amino-acid sequence, 807 residues long: Nucleolar complex protein 3 homolog (807 aa).

2 disordered regions span residues 27 to 93 (KLKN…DMMD) and 167 to 191 (EKPV…EVIE). Positions 40–51 (KKYRKEQRKLRQ) are enriched in basic residues. Residues 52–78 (AVKDAVSKKPIPLEDPKSKRPVKRMER) show a composition bias toward basic and acidic residues. 2 stretches are compositionally biased toward acidic residues: residues 79 to 93 (EEDE…DMMD) and 174 to 190 (QQEE…EEVI). A Glycyl lysine isopeptide (Lys-Gly) (interchain with G-Cter in SUMO2) cross-link involves residue lysine 332. Residues 449 to 489 (FKEKRKTLSRMQRKWKKAEEKLERELREAEASESTEKKLKL) adopt a coiled-coil conformation.

This sequence belongs to the CBF/MAK21 family.

The protein localises to the nucleus. Its subcellular location is the nucleolus. It localises to the nucleus speckle. Functionally, may be required for adipogenesis. The sequence is that of Nucleolar complex protein 3 homolog (Noc3l) from Mus musculus (Mouse).